A 532-amino-acid polypeptide reads, in one-letter code: SET and MYND domain-containing protein DDB_G0288495 (532 aa).

An SET domain is found at 25-448 (PWIEVKSVSE…ENQELLITYI (424 aa)). The MYND-type; degenerate zinc-finger motif lies at 70–116 (CTTCFKILLESNRHNFQTCPSCFQVNYCSNYCKQYSKIETKHTELEC). Positions 199-240 (INSKNNNEFENEEEEEEEQEQKGEGEQEENENNENNEKVKKK) form a coiled coil. The tract at residues 204–234 (NNEFENEEEEEEEQEQKGEGEQEENENNENN) is disordered. Positions 207-217 (FENEEEEEEEQ) are enriched in acidic residues.

This sequence belongs to the class V-like SAM-binding methyltransferase superfamily.

Its function is as follows. Probable methyltransferase. This is SET and MYND domain-containing protein DDB_G0288495 from Dictyostelium discoideum (Social amoeba).